We begin with the raw amino-acid sequence, 118 residues long: Large ribosomal subunit protein bL20 (118 aa).

This sequence belongs to the bacterial ribosomal protein bL20 family.

Functionally, binds directly to 23S ribosomal RNA and is necessary for the in vitro assembly process of the 50S ribosomal subunit. It is not involved in the protein synthesizing functions of that subunit. This is Large ribosomal subunit protein bL20 from Staphylococcus epidermidis (strain ATCC 35984 / DSM 28319 / BCRC 17069 / CCUG 31568 / BM 3577 / RP62A).